Here is a 91-residue protein sequence, read N- to C-terminus: MKISAAVLTVVLMAASLCAPASASPNGSDTIPCCFAYLSAVLPRAHVKEYFYTSSKCSNFAVVFVTRRNRQVCANPKKKWVQEYINYLELK.

A signal peptide spans 1–23; sequence MKISAAVLTVVLMAASLCAPASA. Disulfide bonds link Cys33–Cys57 and Cys34–Cys73.

The protein belongs to the intercrine beta (chemokine CC) family.

It is found in the secreted. In terms of biological role, chemoattractant for blood monocytes, memory T-helper cells and eosinophils. Causes the release of histamine from basophils and activates eosinophils. May activate several chemokine receptors including CCR1, CCR3, CCR4 and CCR5. May also be an agonist of the G protein-coupled receptor GPR75. Together with GPR75, may play a role in neuron survival through activation of a downstream signaling pathway involving the PI3, Akt and MAP kinases. By activating GPR75 may also play a role in insulin secretion by islet cells. The protein is C-C motif chemokine 5 (CCL5) of Sigmodon hispidus (Hispid cotton rat).